Here is a 193-residue protein sequence, read N- to C-terminus: Molybdenum cofactor guanylyltransferase (193 aa).

Residues 8–10 (LAG), Lys-21, Asp-67, and Asp-98 each bind GTP. Asp-98 contributes to the Mg(2+) binding site.

This sequence belongs to the MobA family. Monomer. Mg(2+) is required as a cofactor.

The protein localises to the cytoplasm. It catalyses the reaction Mo-molybdopterin + GTP + H(+) = Mo-molybdopterin guanine dinucleotide + diphosphate. In terms of biological role, transfers a GMP moiety from GTP to Mo-molybdopterin (Mo-MPT) cofactor (Moco or molybdenum cofactor) to form Mo-molybdopterin guanine dinucleotide (Mo-MGD) cofactor. The protein is Molybdenum cofactor guanylyltransferase of Cereibacter sphaeroides (Rhodobacter sphaeroides).